We begin with the raw amino-acid sequence, 131 residues long: Fimbrial assembly protein, serogroups C1 and C2 (131 aa).

This chain is Fimbrial assembly protein, serogroups C1 and C2 (fimB), found in Dichelobacter nodosus (Bacteroides nodosus).